Reading from the N-terminus, the 378-residue chain is Acetylornithine deacetylase (378 aa).

Zn(2+) is bound at residue His-76. Residue Asp-78 is part of the active site. Asp-108 lines the Zn(2+) pocket. Residue Glu-140 is part of the active site. Zn(2+) is bound by residues Glu-141, Glu-165, and His-351.

It belongs to the peptidase M20A family. ArgE subfamily. Homodimer. Zn(2+) serves as cofactor. It depends on Co(2+) as a cofactor. The cofactor is glutathione.

It localises to the cytoplasm. It catalyses the reaction N(2)-acetyl-L-ornithine + H2O = L-ornithine + acetate. Its pathway is amino-acid biosynthesis; L-arginine biosynthesis; L-ornithine from N(2)-acetyl-L-ornithine (linear): step 1/1. Catalyzes the hydrolysis of the amide bond of N(2)-acetylated L-amino acids. Cleaves the acetyl group from N-acetyl-L-ornithine to form L-ornithine, an intermediate in L-arginine biosynthesis pathway, and a branchpoint in the synthesis of polyamines. The chain is Acetylornithine deacetylase from Aliivibrio fischeri (strain MJ11) (Vibrio fischeri).